The primary structure comprises 493 residues: MSNWDTKFLKKGYTFDDVLLIPAESHVLPNEVDLKTKLADNLTLNIPIITAAMDTVTGSKMAIAIARAGGLGVIHKNMSITEQAEEVRKVKRSENGVIIDPFFLTPEHKVSEAEELMQRYRISGVPIVETLANRKLVGIITNRDMRFISDYNAPISEHMTSEHLVTAAVGTDLETAERILHEHRIEKLPLVDNSGRLSGLITIKDIEKVIEFPHAAKDEFGRLLVAAAVGVTSDTFERAEALFEAGADAIVIDTAHGHSAGVLRKIAEIRAHFPNRTLIAGNIATAEGARALYDAGVDVVKVGIGPGSICTTRVVAGVGVPQVTAIYDAAAVAREYGKTIIADGGIKYSGDIVKALAAGGNAVMLGSMFAGTDEAPGETEIYQGRKFKTYRGMGSIAAMKKGSSDRYFQGSVNEANKLVPEGIEGRVAYKGAASDIVFQMLGGIRSGMGYVGAGDIQELHENAQFVEMSGAGLIESHPHDVQITNEAPNYSVH.

CBS domains lie at 97–155 and 159–219; these read VIID…NAPI and MTSE…AKDE. Residues D253 and 303-305 contribute to the NAD(+) site; that span reads GIG. The K(+) site is built by G305 and G307. IMP is bound at residue S308. Residue C310 participates in K(+) binding. The Thioimidate intermediate role is filled by C310. Residues 343 to 345, 366 to 367, and 390 to 394 each bind IMP; these read DGG, GS, and YRGMG. R406 functions as the Proton acceptor in the catalytic mechanism. E421 provides a ligand contact to IMP. Residues E475, S476, and H477 each contribute to the K(+) site.

It belongs to the IMPDH/GMPR family. As to quaternary structure, homotetramer. It depends on K(+) as a cofactor.

It carries out the reaction IMP + NAD(+) + H2O = XMP + NADH + H(+). Its pathway is purine metabolism; XMP biosynthesis via de novo pathway; XMP from IMP: step 1/1. With respect to regulation, mycophenolic acid (MPA) is a non-competitive inhibitor that prevents formation of the closed enzyme conformation by binding to the same site as the amobile flap. In contrast, mizoribine monophosphate (MZP) is a competitive inhibitor that induces the closed conformation. MPA is a potent inhibitor of mammalian IMPDHs but a poor inhibitor of the bacterial enzymes. MZP is a more potent inhibitor of bacterial IMPDH. Its function is as follows. Catalyzes the conversion of inosine 5'-phosphate (IMP) to xanthosine 5'-phosphate (XMP), the first committed and rate-limiting step in the de novo synthesis of guanine nucleotides, and therefore plays an important role in the regulation of cell growth. In Streptococcus pyogenes serotype M1, this protein is Inosine-5'-monophosphate dehydrogenase.